Reading from the N-terminus, the 147-residue chain is Large ribosomal subunit protein bL9 (147 aa).

This sequence belongs to the bacterial ribosomal protein bL9 family.

In terms of biological role, binds to the 23S rRNA. In Clostridium novyi (strain NT), this protein is Large ribosomal subunit protein bL9.